The following is a 398-amino-acid chain: Stimulator of interferon genes protein (398 aa).

Residues 1 to 16 lie on the Cytoplasmic side of the membrane; it reads MSVMGEDALVPRARSR. A helical transmembrane segment spans residues 17–37; that stretch reads LPVMCAAGLGFLTLAVAWLLD. Topologically, residues 38 to 44 are lumenal; the sequence is SDKFSER. The helical transmembrane segment at 45–65 threads the bilayer; that stretch reads AGIIAFGLMLERFIYCICLLA. Residues 66-91 lie on the Cytoplasmic side of the membrane; sequence EELLFHSRQRYHGRMSEIFRACFRGS. The helical transmembrane segment at 92-112 threads the bilayer; the sequence is GILGMCAIFLMLMLGGVSFSV. At 113 to 120 the chain is on the lumenal side; sequence KQWSHFNL. The helical transmembrane segment at 121-141 threads the bilayer; it reads MCAGYMLLNSLGVLGPAPVEI. Over 142 to 398 the chain is Cytoplasmic; the sequence is SEICEAKKMN…FNPSSAMKQN (257 aa). The segment at 150-331 is cyclic dinucleotide-binding domain (CBD); that stretch reads MNVAHGLAWS…QNLKQQDGEI (182 aa). 2',3'-cGAMP contacts are provided by S159, Y164, R230, and T254. Residues S159, Y164, 230-233, and T254 each bind 3',3'-c-di-GMP; that span reads RSYT. The disordered stretch occupies residues 375-398; that stretch reads PQSLRSEPVETTDYFNPSSAMKQN. Residues 387–398 are compositionally biased toward polar residues; it reads DYFNPSSAMKQN.

It belongs to the STING family. In terms of assembly, homodimer; forms a homodimer in absence of cyclic nucleotide (c-di-GMP or cGAMP). Homotetramer; in presence of cyclic nucleotide (c-di-GMP or cGAMP), forms tetramers and higher-order oligomers through side-by-side packing. Interacts (when phosphorylated) with irf3; following activation and phosphorylation by tbk1, recruits irf3. Phosphorylation by TBK1 leads to activation and production of IFN-beta. Following cyclic nucleotide (c-di-GMP or cGAMP)-binding, activation and translocation from the endoplasmic reticulum, STING1 is phosphorylated by tbk1, leading to recruitment of the transcription factor irf3 to induce type-I interferons and other cytokines.

It localises to the endoplasmic reticulum membrane. The protein localises to the cytoplasm. The protein resides in the perinuclear region. Its subcellular location is the endoplasmic reticulum-Golgi intermediate compartment membrane. It is found in the golgi apparatus membrane. It localises to the cytoplasmic vesicle. The protein localises to the autophagosome membrane. It carries out the reaction H(+)(in) = H(+)(out). In terms of biological role, facilitator of innate immune signaling that acts as a sensor of cytosolic DNA from bacteria and viruses and promotes the production of type I interferon (IFN-alpha and IFN-beta). Innate immune response is triggered in response to non-CpG double-stranded DNA from viruses and bacteria delivered to the cytoplasm. Acts by binding cyclic dinucleotides: recognizes and binds cyclic di-GMP (c-di-GMP), a second messenger produced by bacteria, and cyclic GMP-AMP (cGAMP), a messenger produced by CGAS in response to DNA virus in the cytosol. Upon binding of c-di-GMP or cGAMP, STING1 oligomerizes and is able to activate both NF-kappa-B and irf3 transcription pathways to induce expression of type I interferon and exert a potent anti-viral state. Exhibits 2',3' phosphodiester linkage-specific ligand recognition: can bind both 2'-3' linked cGAMP and 3'-3' linked cGAMP but is preferentially activated by 2'-3' linked cGAMP. In addition to promote the production of type I interferons, plays a direct role in autophagy. Following cGAMP-binding, STING1 buds from the endoplasmic reticulum into COPII vesicles, which then form the endoplasmic reticulum-Golgi intermediate compartment (ERGIC). The ERGIC serves as the membrane source for LC3 lipidation, leading to formation of autophagosomes that target cytosolic DNA or DNA viruses for degradation by the lysosome. Promotes autophagy by acting as a proton channel that directs proton efflux from the Golgi to facilitate LC3 lipidation. The autophagy- and interferon-inducing activities can be uncoupled and autophagy induction is independent of TBK1 phosphorylation. In Danio rerio (Zebrafish), this protein is Stimulator of interferon genes protein.